The following is a 398-amino-acid chain: Succinate--CoA ligase [ADP-forming] subunit beta (398 aa).

The ATP-grasp domain occupies 9 to 253 (KEILASYGVR…IREENPIEVE (245 aa)). Residues K50, 57-59 (GRG), V106, and E116 each bind ATP. Residues N208 and D222 each coordinate Mg(2+). Substrate is bound by residues N273 and 330–332 (GIV).

Belongs to the succinate/malate CoA ligase beta subunit family. Heterotetramer of two alpha and two beta subunits. It depends on Mg(2+) as a cofactor.

It carries out the reaction succinate + ATP + CoA = succinyl-CoA + ADP + phosphate. The enzyme catalyses GTP + succinate + CoA = succinyl-CoA + GDP + phosphate. It participates in carbohydrate metabolism; tricarboxylic acid cycle; succinate from succinyl-CoA (ligase route): step 1/1. Functionally, succinyl-CoA synthetase functions in the citric acid cycle (TCA), coupling the hydrolysis of succinyl-CoA to the synthesis of either ATP or GTP and thus represents the only step of substrate-level phosphorylation in the TCA. The beta subunit provides nucleotide specificity of the enzyme and binds the substrate succinate, while the binding sites for coenzyme A and phosphate are found in the alpha subunit. In Flavobacterium psychrophilum (strain ATCC 49511 / DSM 21280 / CIP 103535 / JIP02/86), this protein is Succinate--CoA ligase [ADP-forming] subunit beta.